Here is a 235-residue protein sequence, read N- to C-terminus: Phosphoribosylformylglycinamidine synthase subunit PurQ (235 aa).

A Glutamine amidotransferase type-1 domain is found at Phe5 to Ala235. Cys88 (nucleophile) is an active-site residue. Residues His205 and Glu207 contribute to the active site.

Part of the FGAM synthase complex composed of 1 PurL, 1 PurQ and 2 PurS subunits.

The protein localises to the cytoplasm. It catalyses the reaction N(2)-formyl-N(1)-(5-phospho-beta-D-ribosyl)glycinamide + L-glutamine + ATP + H2O = 2-formamido-N(1)-(5-O-phospho-beta-D-ribosyl)acetamidine + L-glutamate + ADP + phosphate + H(+). The catalysed reaction is L-glutamine + H2O = L-glutamate + NH4(+). It functions in the pathway purine metabolism; IMP biosynthesis via de novo pathway; 5-amino-1-(5-phospho-D-ribosyl)imidazole from N(2)-formyl-N(1)-(5-phospho-D-ribosyl)glycinamide: step 1/2. Part of the phosphoribosylformylglycinamidine synthase complex involved in the purines biosynthetic pathway. Catalyzes the ATP-dependent conversion of formylglycinamide ribonucleotide (FGAR) and glutamine to yield formylglycinamidine ribonucleotide (FGAM) and glutamate. The FGAM synthase complex is composed of three subunits. PurQ produces an ammonia molecule by converting glutamine to glutamate. PurL transfers the ammonia molecule to FGAR to form FGAM in an ATP-dependent manner. PurS interacts with PurQ and PurL and is thought to assist in the transfer of the ammonia molecule from PurQ to PurL. The chain is Phosphoribosylformylglycinamidine synthase subunit PurQ from Salinibacter ruber (strain DSM 13855 / M31).